The sequence spans 184 residues: NADH-quinone oxidoreductase subunit B (184 aa).

The [4Fe-4S] cluster site is built by Cys37, Cys38, Cys103, and Cys132.

Belongs to the complex I 20 kDa subunit family. NDH-1 is composed of 14 different subunits. Subunits NuoB, C, D, E, F, and G constitute the peripheral sector of the complex. [4Fe-4S] cluster is required as a cofactor.

The protein localises to the cell membrane. The enzyme catalyses a quinone + NADH + 5 H(+)(in) = a quinol + NAD(+) + 4 H(+)(out). In terms of biological role, NDH-1 shuttles electrons from NADH, via FMN and iron-sulfur (Fe-S) centers, to quinones in the respiratory chain. The immediate electron acceptor for the enzyme in this species is believed to be a menaquinone. Couples the redox reaction to proton translocation (for every two electrons transferred, four hydrogen ions are translocated across the cytoplasmic membrane), and thus conserves the redox energy in a proton gradient. The sequence is that of NADH-quinone oxidoreductase subunit B from Mycobacterium bovis (strain BCG / Pasteur 1173P2).